The primary structure comprises 242 residues: Copper transport protein B (242 aa).

2 consecutive transmembrane segments (helical) span residues 8–28 (ICLC…ACVL) and 86–106 (ITGP…TAGY). A disordered region spans residues 153–175 (ESATTNVPSSQTPNESSPLVAGR). The segment covering 154 to 169 (SATTNVPSSQTPNESS) has biased composition (polar residues). The next 2 helical transmembrane spans lie at 187-207 (IILA…MLLF) and 210-230 (YNGF…LVFG).

It belongs to the copper transporter (Ctr) (TC 1.A.56) family. SLC31A subfamily.

It localises to the membrane. Transporter that is probably involved in the transport of copper, even if it does not act as a major copper transporter. The protein is Copper transport protein B of Aspergillus fumigatus (strain ATCC MYA-4609 / CBS 101355 / FGSC A1100 / Af293) (Neosartorya fumigata).